Consider the following 353-residue polypeptide: MTDFSQIHKPVLLQECVDLVTPALHASDSVAVDCTLGLAGHTIAFLKAAPNATVIGIDRDEEALDKATARIAQEGLSARFVPVHAAFDQFDEVLRAQGVSRVQAVFMDLGLSSLQIDERERGFSYAHDAPLDMRMDTSQALTAREILATYDADRLAHIFKEYGEERFSKPIAKRIVQQRQSSPLETSSQLTALVDAVIPAARRGSGNPAKRVFQALRIEVNGELDKLRRTLPQIGLHLAVGGRLVVESYHSLEDRTVKNFMAQGLRVDAPADMPVIPPDMQPFFKALTKGAVKADAGEIAYNPRSASVRLRAVELTRPLPQRWVHAFELESQGSEDGVRGAHGHRRRTQARRG.

S-adenosyl-L-methionine is bound by residues 39-41 (AGH), Asp58, Phe90, Asp108, and Gln115. The interval 334-353 (SEDGVRGAHGHRRRTQARRG) is disordered. Residues 341–353 (AHGHRRRTQARRG) are compositionally biased toward basic residues.

Belongs to the methyltransferase superfamily. RsmH family.

The protein localises to the cytoplasm. It carries out the reaction cytidine(1402) in 16S rRNA + S-adenosyl-L-methionine = N(4)-methylcytidine(1402) in 16S rRNA + S-adenosyl-L-homocysteine + H(+). In terms of biological role, specifically methylates the N4 position of cytidine in position 1402 (C1402) of 16S rRNA. This is Ribosomal RNA small subunit methyltransferase H from Bifidobacterium animalis subsp. lactis (strain AD011).